Here is a 312-residue protein sequence, read N- to C-terminus: Pyridoxal kinase (312 aa).

Met-1 is subject to N-acetylmethionine. Residues Ser-12 and Thr-47 each contribute to the pyridoxal site. Residue Thr-47 coordinates pyridoxal 5'-phosphate. The residue at position 59 (Ser-59) is a Phosphoserine. Asp-113 is a binding site for ATP. Residue Asp-113 participates in Na(+) binding. Residue Asp-118 participates in Mg(2+) binding. Thr-148 is a Na(+) binding site. Position 150–153 (150–153 (NQFE)) interacts with ATP. Residue Ser-164 is modified to Phosphoserine. Thr-186 contributes to the Na(+) binding site. An ATP-binding site is contributed by 186–187 (TS). Ser-213 carries the phosphoserine modification. Residues 226 to 228 (VDP) and Thr-233 each bind ATP. Pyridoxal 5'-phosphate is bound at residue 234–235 (GD). Catalysis depends on Asp-235, which acts as the Proton acceptor. Ser-285 is subject to Phosphoserine.

The protein belongs to the pyridoxine kinase family. In terms of assembly, homodimer. It depends on Zn(2+) as a cofactor. Mg(2+) serves as cofactor.

The protein localises to the cytoplasm. The protein resides in the cytosol. It catalyses the reaction pyridoxal + ATP = pyridoxal 5'-phosphate + ADP + H(+). The catalysed reaction is pyridoxamine + ATP = pyridoxamine 5'-phosphate + ADP + H(+). It carries out the reaction pyridoxine + ATP = pyridoxine 5'-phosphate + ADP + H(+). It participates in cofactor metabolism; pyridoxal 5'-phosphate salvage; pyridoxal 5'-phosphate from pyridoxal: step 1/1. It functions in the pathway cofactor metabolism; pyridoxal 5'-phosphate salvage; pyridoxine 5'-phosphate from pyridoxine: step 1/1. Its pathway is cofactor metabolism; pyridoxal 5'-phosphate salvage; pyridoxamine 5'-phosphate from pyridoxamine: step 1/1. Activity is increased in the presence of K(+)or Na(+). Functionally, catalyzes the phosphorylation of the dietary vitamin B6 vitamers pyridoxal (PL), pyridoxine (PN) and pyridoxamine (PM) to form pyridoxal 5'-phosphate (PLP), pyridoxine 5'-phosphate (PNP) and pyridoxamine 5'-phosphate (PMP), respectively. PLP is the active form of vitamin B6, and acts as a cofactor for over 140 different enzymatic reactions. This Rattus norvegicus (Rat) protein is Pyridoxal kinase (Pdxk).